A 419-amino-acid polypeptide reads, in one-letter code: Tyrosine--tRNA ligase (419 aa).

Tyr-34 provides a ligand contact to L-tyrosine. Positions 39–48 (PTADSLHLGH) match the 'HIGH' region motif. Residues Tyr-169 and Gln-173 each contribute to the L-tyrosine site. The 'KMSKS' region signature appears at 229-233 (KFGKS). Lys-232 provides a ligand contact to ATP. One can recognise an S4 RNA-binding domain in the interval 352 to 419 (LNIIDLLVTS…KKKYFVLNFK (68 aa)).

The protein belongs to the class-I aminoacyl-tRNA synthetase family. TyrS type 1 subfamily. Homodimer.

It localises to the cytoplasm. It catalyses the reaction tRNA(Tyr) + L-tyrosine + ATP = L-tyrosyl-tRNA(Tyr) + AMP + diphosphate + H(+). Catalyzes the attachment of tyrosine to tRNA(Tyr) in a two-step reaction: tyrosine is first activated by ATP to form Tyr-AMP and then transferred to the acceptor end of tRNA(Tyr). This chain is Tyrosine--tRNA ligase, found in Streptococcus agalactiae serotype Ia (strain ATCC 27591 / A909 / CDC SS700).